A 417-amino-acid chain; its full sequence is Serine hydroxymethyltransferase (417 aa).

Lysine 54 is modified (N6-acetyllysine). Residues leucine 121 and 125–127 (GHL) each bind (6S)-5,6,7,8-tetrahydrofolate. The residue at position 229 (lysine 229) is an N6-(pyridoxal phosphate)lysine. Lysine 250, lysine 285, and lysine 354 each carry N6-acetyllysine. Position 355–357 (355–357 (SPF)) interacts with (6S)-5,6,7,8-tetrahydrofolate. Lysine 375 is modified (N6-acetyllysine).

This sequence belongs to the SHMT family. Homodimer. Pyridoxal 5'-phosphate serves as cofactor.

It localises to the cytoplasm. The enzyme catalyses (6R)-5,10-methylene-5,6,7,8-tetrahydrofolate + glycine + H2O = (6S)-5,6,7,8-tetrahydrofolate + L-serine. It functions in the pathway one-carbon metabolism; tetrahydrofolate interconversion. The protein operates within amino-acid biosynthesis; glycine biosynthesis; glycine from L-serine: step 1/1. Catalyzes the reversible interconversion of serine and glycine with tetrahydrofolate (THF) serving as the one-carbon carrier. This reaction serves as the major source of one-carbon groups required for the biosynthesis of purines, thymidylate, methionine, and other important biomolecules. Also exhibits THF-independent aldolase activity toward beta-hydroxyamino acids, producing glycine and aldehydes, via a retro-aldol mechanism. The protein is Serine hydroxymethyltransferase of Shigella sonnei (strain Ss046).